The following is a 231-amino-acid chain: Sugar fermentation stimulation protein homolog (231 aa).

It belongs to the SfsA family.

The chain is Sugar fermentation stimulation protein homolog from Pyrobaculum islandicum (strain DSM 4184 / JCM 9189 / GEO3).